The following is a 118-amino-acid chain: Small ribosomal subunit protein uS13 (118 aa).

The interval 99–118 (GQRTRTNARTRKGPRKAIKK) is disordered.

It belongs to the universal ribosomal protein uS13 family. In terms of assembly, part of the 30S ribosomal subunit. Forms a loose heterodimer with protein S19. Forms two bridges to the 50S subunit in the 70S ribosome.

Functionally, located at the top of the head of the 30S subunit, it contacts several helices of the 16S rRNA. In the 70S ribosome it contacts the 23S rRNA (bridge B1a) and protein L5 of the 50S subunit (bridge B1b), connecting the 2 subunits; these bridges are implicated in subunit movement. Contacts the tRNAs in the A and P-sites. The sequence is that of Small ribosomal subunit protein uS13 from Xylella fastidiosa (strain M23).